The primary structure comprises 250 residues: Anamorsin homolog 1 (250 aa).

Residues 1 to 104 (MNLKITINQQ…KKLNIPQQEF (104 aa)) form an N-terminal SAM-like domain region. A linker region spans residues 104–149 (FNNCYGKYDYIEQKFQNQINFFKQVDINGKQEIIDENELLDDGVQV). C155, C162, C165, and C167 together coordinate [2Fe-2S] cluster. The fe-S binding site A stretch occupies residues 155 to 167 (CASKPRACANCTC). Residues C193, C196, C204, and C207 each contribute to the [4Fe-4S] cluster site. Short sequence motifs (cx2C motif) lie at residues 193-196 (CGSC) and 204-207 (CANC). Positions 193 to 207 (CGSCYLGDAFRCANC) are fe-S binding site B.

It belongs to the anamorsin family. Monomer. Requires [2Fe-2S] cluster as cofactor. [4Fe-4S] cluster is required as a cofactor.

The protein resides in the cytoplasm. It is found in the mitochondrion intermembrane space. In terms of biological role, component of the cytosolic iron-sulfur (Fe-S) protein assembly (CIA) machinery. Required for the maturation of extramitochondrial Fe-S proteins. Part of an electron transfer chain functioning in an early step of cytosolic Fe-S biogenesis, facilitating the de novo assembly of a [4Fe-4S] cluster on the cytosolic Fe-S scaffold complex. Electrons are transferred from NADPH via a FAD- and FMN-containing diflavin oxidoreductase. Together with the diflavin oxidoreductase, also required for the assembly of the diferric tyrosyl radical cofactor of ribonucleotide reductase (RNR), probably by providing electrons for reduction during radical cofactor maturation in the catalytic small subunit. The chain is Anamorsin homolog 1 from Paramecium tetraurelia.